The primary structure comprises 473 residues: Laccase-3 (473 aa).

Residues 1-21 form the signal peptide; it reads MSFSSLRRALVFLGACSSALA. 2 consecutive Plastocyanin-like domains span residues 23 to 148 and 160 to 298; these read IGPV…LVIY and VDDE…ILRY. An N-linked (GlcNAc...) asparagine glycan is attached at Asn-75. Cu cation-binding residues include His-85, His-87, His-130, and His-132. Disulfide bonds link Cys-106-Cys-462 and Cys-138-Cys-221. Asn-226, Asn-283, Asn-309, Asn-346, Asn-350, and Asn-374 each carry an N-linked (GlcNAc...) asparagine glycan. The Plastocyanin-like 3 domain occupies 365–444; the sequence is TVPVLLQILN…AGLAIVFAED (80 aa). His-410, His-413, His-415, His-426, Cys-427, His-428, and His-432 together coordinate Cu cation. N-linked (GlcNAc...) asparagine glycosylation occurs at Asn-470.

It belongs to the multicopper oxidase family. As to quaternary structure, homodimer. Requires Cu cation as cofactor.

The protein localises to the secreted. The catalysed reaction is 4 hydroquinone + O2 = 4 benzosemiquinone + 2 H2O. In terms of biological role, lignin degradation and detoxification of lignin-derived products. The polypeptide is Laccase-3 (LCC3) (Trametes villosa (White-rot fungus)).